The sequence spans 607 residues: UvrABC system protein C (607 aa).

The GIY-YIG domain maps to 16–94 (ARPGVYRMFD…IKQWRPPYNI (79 aa)). The UVR domain maps to 203–238 (QQLGNELNAEMEKAAMALNFEKAAELRDQIALLRRV).

This sequence belongs to the UvrC family. In terms of assembly, interacts with UvrB in an incision complex.

Its subcellular location is the cytoplasm. The UvrABC repair system catalyzes the recognition and processing of DNA lesions. UvrC both incises the 5' and 3' sides of the lesion. The N-terminal half is responsible for the 3' incision and the C-terminal half is responsible for the 5' incision. This chain is UvrABC system protein C, found in Pseudomonas putida (strain W619).